The sequence spans 113 residues: Cytochrome c (113 aa).

Ala-1 is subject to N-acetylalanine. Heme c-binding residues include Cys-22, Cys-25, and His-26. An N6,N6,N6-trimethyllysine modification is found at Lys-80. Heme c is bound at residue Met-88. Lys-94 is modified (N6,N6,N6-trimethyllysine).

This sequence belongs to the cytochrome c family. Binds 1 heme c group covalently per subunit.

Its subcellular location is the mitochondrion intermembrane space. In terms of biological role, electron carrier protein. The oxidized form of the cytochrome c heme group can accept an electron from the heme group of the cytochrome c1 subunit of cytochrome reductase. Cytochrome c then transfers this electron to the cytochrome oxidase complex, the final protein carrier in the mitochondrial electron-transport chain. In Ginkgo biloba (Ginkgo), this protein is Cytochrome c.